The following is a 142-amino-acid chain: Large ribosomal subunit protein uL11 (142 aa).

It belongs to the universal ribosomal protein uL11 family. Part of the ribosomal stalk of the 50S ribosomal subunit. Interacts with L10 and the large rRNA to form the base of the stalk. L10 forms an elongated spine to which L12 dimers bind in a sequential fashion forming a multimeric L10(L12)X complex. Post-translationally, one or more lysine residues are methylated.

In terms of biological role, forms part of the ribosomal stalk which helps the ribosome interact with GTP-bound translation factors. The polypeptide is Large ribosomal subunit protein uL11 (Pasteurella multocida (strain Pm70)).